We begin with the raw amino-acid sequence, 237 residues long: Probable septum site-determining protein MinC (237 aa).

Belongs to the MinC family. As to quaternary structure, interacts with MinD and FtsZ.

Its function is as follows. Cell division inhibitor that blocks the formation of polar Z ring septums. Rapidly oscillates between the poles of the cell to destabilize FtsZ filaments that have formed before they mature into polar Z rings. Prevents FtsZ polymerization. The protein is Probable septum site-determining protein MinC of Buchnera aphidicola subsp. Acyrthosiphon pisum (strain 5A).